The primary structure comprises 1597 residues: Pentafunctional AROM polypeptide (1597 aa).

The 3-dehydroquinate synthase stretch occupies residues 1–384 (MGVPTKISIL…HEPRASTVSN (384 aa)). NAD(+)-binding positions include 44–46 (DTN), 81–84 (ESSK), 114–116 (GGV), and aspartate 119. Arginine 130 is a binding site for 7-phospho-2-dehydro-3-deoxy-D-arabino-heptonate. 139 to 140 (TT) is a binding site for NAD(+). 2 residues coordinate 7-phospho-2-dehydro-3-deoxy-D-arabino-heptonate: aspartate 146 and lysine 152. Lysine 161 is an NAD(+) binding site. Position 162 (asparagine 162) interacts with 7-phospho-2-dehydro-3-deoxy-D-arabino-heptonate. Residues 179–182 (FLNT) and asparagine 190 each bind NAD(+). Residue glutamate 194 participates in Zn(2+) binding. 7-phospho-2-dehydro-3-deoxy-D-arabino-heptonate contacts are provided by residues 194-197 (EVIK) and lysine 250. The Proton acceptor; for 3-dehydroquinate synthase activity role is filled by glutamate 260. Residues 264–268 (RNLLN) and histidine 271 each bind 7-phospho-2-dehydro-3-deoxy-D-arabino-heptonate. A Zn(2+)-binding site is contributed by histidine 271. Histidine 275 functions as the Proton acceptor; for 3-dehydroquinate synthase activity in the catalytic mechanism. 7-phospho-2-dehydro-3-deoxy-D-arabino-heptonate is bound by residues histidine 287 and lysine 356. Residue histidine 287 coordinates Zn(2+). Residues 397-842 (VSPGVPKNLN…WDSLAQTFKV (446 aa)) are EPSP synthase. Residue cysteine 824 is the For EPSP synthase activity of the active site. Residues 866–1057 (ASIFIIGMRG…RSKENTFFVS (192 aa)) are shikimate kinase. 872-879 (GMRGAGKT) contacts ATP. The segment at 1058–1278 (LTLPDLAPAA…AAPGQLSARE (221 aa)) is 3-dehydroquinase. Histidine 1181 acts as the Proton acceptor; for 3-dehydroquinate dehydratase activity in catalysis. Catalysis depends on lysine 1209, which acts as the Schiff-base intermediate with substrate; for 3-dehydroquinate dehydratase activity. The tract at residues 1291–1597 (SKKFAVIGNP…VQPKDDDIST (307 aa)) is shikimate dehydrogenase.

In the N-terminal section; belongs to the sugar phosphate cyclases superfamily. Dehydroquinate synthase family. The protein in the 2nd section; belongs to the EPSP synthase family. This sequence in the 3rd section; belongs to the shikimate kinase family. It in the 4th section; belongs to the type-I 3-dehydroquinase family. In the C-terminal section; belongs to the shikimate dehydrogenase family. In terms of assembly, homodimer. The cofactor is Zn(2+).

Its subcellular location is the cytoplasm. The catalysed reaction is 7-phospho-2-dehydro-3-deoxy-D-arabino-heptonate = 3-dehydroquinate + phosphate. It catalyses the reaction 3-dehydroquinate = 3-dehydroshikimate + H2O. It carries out the reaction shikimate + NADP(+) = 3-dehydroshikimate + NADPH + H(+). The enzyme catalyses shikimate + ATP = 3-phosphoshikimate + ADP + H(+). The catalysed reaction is 3-phosphoshikimate + phosphoenolpyruvate = 5-O-(1-carboxyvinyl)-3-phosphoshikimate + phosphate. It participates in metabolic intermediate biosynthesis; chorismate biosynthesis; chorismate from D-erythrose 4-phosphate and phosphoenolpyruvate: step 2/7. The protein operates within metabolic intermediate biosynthesis; chorismate biosynthesis; chorismate from D-erythrose 4-phosphate and phosphoenolpyruvate: step 3/7. Its pathway is metabolic intermediate biosynthesis; chorismate biosynthesis; chorismate from D-erythrose 4-phosphate and phosphoenolpyruvate: step 4/7. It functions in the pathway metabolic intermediate biosynthesis; chorismate biosynthesis; chorismate from D-erythrose 4-phosphate and phosphoenolpyruvate: step 5/7. It participates in metabolic intermediate biosynthesis; chorismate biosynthesis; chorismate from D-erythrose 4-phosphate and phosphoenolpyruvate: step 6/7. Functionally, the AROM polypeptide catalyzes 5 consecutive enzymatic reactions in prechorismate polyaromatic amino acid biosynthesis. The protein is Pentafunctional AROM polypeptide of Blastomyces gilchristii (strain SLH14081) (Blastomyces dermatitidis).